The chain runs to 407 residues: WEB family protein At3g51720 (407 aa).

3 coiled-coil regions span residues 72–99, 128–217, and 247–278; these read KVLKSLESTKAIVEELKSKIQNKEDKEN, SVGL…ARAA, and EEILETIDETAREIRSSRRTLEEGLAKMEAEE.

It belongs to the WEB family.

This chain is WEB family protein At3g51720, found in Arabidopsis thaliana (Mouse-ear cress).